The following is a 299-amino-acid chain: tRNA dimethylallyltransferase (299 aa).

11–18 contributes to the ATP binding site; the sequence is GPTAVGKT. 13–18 contacts substrate; it reads TAVGKT. Positions 36-39 are interaction with substrate tRNA; sequence DSQQ.

Belongs to the IPP transferase family. In terms of assembly, monomer. The cofactor is Mg(2+).

It carries out the reaction adenosine(37) in tRNA + dimethylallyl diphosphate = N(6)-dimethylallyladenosine(37) in tRNA + diphosphate. Functionally, catalyzes the transfer of a dimethylallyl group onto the adenine at position 37 in tRNAs that read codons beginning with uridine, leading to the formation of N6-(dimethylallyl)adenosine (i(6)A). This Streptococcus pyogenes serotype M28 (strain MGAS6180) protein is tRNA dimethylallyltransferase.